The sequence spans 605 residues: Probable potassium transport system protein Kup 3 (605 aa).

Helical transmembrane passes span 16–36 (ALGLVFGDIGTSPIYTLTVIF), 49–69 (ILSLIFWTMTILVSAEYAWLA), 97–117 (VAFAGFLSFVGVSLLLGDAVI), 138–158 (GLSTGALVAIAAAIAIGLFSV), 170–190 (FGPIMALWFGTLAVTGAVSAF), 212–232 (GLAGYFVLSEVILCATGGEAL), 247–267 (AWHFVFVALYLNYLGQGVFAI), 287–307 (LYIPFLILTIMATIIASQAII), 339–359 (IYLGAVNWSLMVAVIFIMLVF), 368–388 (AYGMAVTGSMTITGIMMIIVF), 397–417 (ALVALVVTLIAAAYHVSTFSK), and 418–438 (LPHGAYWSIILASIPFVTIII).

Belongs to the HAK/KUP transporter (TC 2.A.72) family.

The protein localises to the cell inner membrane. It carries out the reaction K(+)(in) + H(+)(in) = K(+)(out) + H(+)(out). Functionally, transport of potassium into the cell. Likely operates as a K(+):H(+) symporter. The protein is Probable potassium transport system protein Kup 3 of Geobacter sulfurreducens (strain ATCC 51573 / DSM 12127 / PCA).